A 294-amino-acid polypeptide reads, in one-letter code: ATP phosphoribosyltransferase (294 aa).

This sequence belongs to the ATP phosphoribosyltransferase family. Long subfamily. It depends on Mg(2+) as a cofactor.

It localises to the cytoplasm. It catalyses the reaction 1-(5-phospho-beta-D-ribosyl)-ATP + diphosphate = 5-phospho-alpha-D-ribose 1-diphosphate + ATP. The protein operates within amino-acid biosynthesis; L-histidine biosynthesis; L-histidine from 5-phospho-alpha-D-ribose 1-diphosphate: step 1/9. Its activity is regulated as follows. Feedback inhibited by histidine. Its function is as follows. Catalyzes the condensation of ATP and 5-phosphoribose 1-diphosphate to form N'-(5'-phosphoribosyl)-ATP (PR-ATP). Has a crucial role in the pathway because the rate of histidine biosynthesis seems to be controlled primarily by regulation of HisG enzymatic activity. In Chlorobium phaeovibrioides (strain DSM 265 / 1930) (Prosthecochloris vibrioformis (strain DSM 265)), this protein is ATP phosphoribosyltransferase.